A 197-amino-acid polypeptide reads, in one-letter code: Phospholipid hydroperoxide glutathione peroxidase (197 aa).

At serine 40 the chain carries Phosphoserine. Selenocysteine 73 is a catalytic residue. Selenocysteine 73 is a non-standard amino acid (selenocysteine).

The protein belongs to the glutathione peroxidase family. As to quaternary structure, monomer. Has a tendency to form higher mass oligomers. Interacts with FUNDC1; this interaction promotes GPX4 recruitment into mitochondria through TOM/TIM complex where it is degraded by mitophagy.

The protein localises to the mitochondrion. The protein resides in the cytoplasm. It carries out the reaction a hydroperoxy polyunsaturated fatty acid + 2 glutathione = a hydroxy polyunsaturated fatty acid + glutathione disulfide + H2O. The enzyme catalyses 2 glutathione + H2O2 = glutathione disulfide + 2 H2O. The catalysed reaction is tert-butyl hydroperoxide + 2 glutathione = tert-butanol + glutathione disulfide + H2O. It catalyses the reaction cumene hydroperoxide + 2 glutathione = 2-phenylpropan-2-ol + glutathione disulfide + H2O. It carries out the reaction (9S)-hydroperoxy-(10E,12Z)-octadecadienoate + 2 glutathione = (9S)-hydroxy-(10E,12Z)-octadecadienoate + glutathione disulfide + H2O. The enzyme catalyses (13S)-hydroperoxy-(9Z,11E)-octadecadienoate + 2 glutathione = (13S)-hydroxy-(9Z,11E)-octadecadienoate + glutathione disulfide + H2O. The catalysed reaction is (5S)-hydroperoxy-(6E,8Z,11Z,14Z)-eicosatetraenoate + 2 glutathione = (5S)-hydroxy-(6E,8Z,11Z,14Z)-eicosatetraenoate + glutathione disulfide + H2O. It catalyses the reaction (12R)-hydroperoxy-(5Z,8Z,10E,14Z)-eicosatetraenoate + 2 glutathione = (12R)-hydroxy-(5Z,8Z,10E,14Z)-eicosatetraenoate + glutathione disulfide + H2O. It carries out the reaction (12S)-hydroperoxy-(5Z,8Z,10E,14Z)-eicosatetraenoate + 2 glutathione = (12S)-hydroxy-(5Z,8Z,10E,14Z)-eicosatetraenoate + glutathione disulfide + H2O. The enzyme catalyses (15S)-hydroperoxy-(5Z,8Z,11Z,13E)-eicosatetraenoate + 2 glutathione = (15S)-hydroxy-(5Z,8Z,11Z,13E)-eicosatetraenoate + glutathione disulfide + H2O. The catalysed reaction is (5S)-hydroperoxy-(6E,8Z,11Z,14Z,17Z)-eicosapentaenoate + 2 glutathione = (5S)-hydroxy-(6E,8Z,11Z,14Z,17Z)-eicosapentaenoate + glutathione disulfide + H2O. It catalyses the reaction (12S)-hydroperoxy-(5Z,8Z,10E,14Z,17Z)-eicosapentaenoate + 2 glutathione = (12S)-hydroxy-(5Z,8Z,10E,14Z,17Z)-eicosapentaenoate + glutathione disulfide + H2O. It carries out the reaction (15S)-hydroperoxy-(5Z,8Z,11Z,13E,17Z)-eicosapentaenoate + 2 glutathione = (15S)-hydroxy-(5Z,8Z,11Z,13E,17Z)-eicosapentaenoate + glutathione disulfide + H2O. The enzyme catalyses (15S)-hydroperoxy-(11Z,13E)-eicosadienoate + 2 glutathione = (15S)-hydroxy-(11Z,13E)-eicosadienoate + glutathione disulfide + H2O. The catalysed reaction is (17S)-hydroperoxy-(4Z,7Z,10Z,13Z,15E,19Z)-docosahexaenoate + 2 glutathione = (17S)-hydroxy-(4Z,7Z,10Z,13Z,15E,19Z)-docosahexaenoate + glutathione disulfide + H2O. It catalyses the reaction a hydroperoxy-1,2-diacyl-glycero-3-phosphocholine + 2 glutathione = a hydroxy-1,2-diacyl-glycero-3-phosphocholine + glutathione disulfide + H2O. Essential antioxidant peroxidase that directly reduces phospholipid hydroperoxide even if they are incorporated in membranes and lipoproteins. Can also reduce fatty acid hydroperoxide, cholesterol hydroperoxide and thymine hydroperoxide. Plays a key role in protecting cells from oxidative damage by preventing membrane lipid peroxidation. Required to prevent cells from ferroptosis, a non-apoptotic cell death resulting from an iron-dependent accumulation of lipid reactive oxygen species. The presence of selenocysteine (Sec) versus Cys at the active site is essential for life: it provides resistance to overoxidation and prevents cells against ferroptosis. The presence of Sec at the active site is also essential for the survival of a specific type of parvalbumin-positive interneurons, thereby preventing against fatal epileptic seizures. May be required to protect cells from the toxicity of ingested lipid hydroperoxides. Required for normal sperm development and male fertility. Essential for maturation and survival of photoreceptor cells. Plays a role in a primary T-cell response to viral and parasitic infection by protecting T-cells from ferroptosis and by supporting T-cell expansion. Plays a role of glutathione peroxidase in platelets in the arachidonic acid metabolism. Reduces hydroperoxy ester lipids formed by a 15-lipoxygenase that may play a role as down-regulator of the cellular 15-lipoxygenase pathway. Can also reduce small soluble hydroperoxides such as H2O2, cumene hydroperoxide and tert-butyl hydroperoxide. This is Phospholipid hydroperoxide glutathione peroxidase from Hylobates lar (Lar gibbon).